We begin with the raw amino-acid sequence, 100 residues long: Small ribosomal subunit protein uS14c (100 aa).

This sequence belongs to the universal ribosomal protein uS14 family. In terms of assembly, part of the 30S ribosomal subunit.

It is found in the plastid. It localises to the chloroplast. In terms of biological role, binds 16S rRNA, required for the assembly of 30S particles. The polypeptide is Small ribosomal subunit protein uS14c (Tupiella akineta (Green alga)).